The chain runs to 326 residues: MTSSMSPAPAPAYAQVMEDMEKGKELAAQLQGLLRDSPEAGRFVDQILHTFSRAMRALDKAAVSAAGGEGSEVQSEVTCGGGASAGGKRKAPAADRKANCRRRTQQSSGNSVVVKNLDDGQAWRKYGQKEIQNSKHPKAYFRCTHKYDQLCTAQRQVQRCDDDPASYRVTYIGEHTCRDPATAPIIAAHVIHQVAAGDNDDGCGGLQAGSRLISFVAAPAAPVDAAAAPTTSTITTVTAPGPLLQPLKVEGGVGSSDQEEVLSSLTPGSSAARGGGGGGGVAGPFGPDQGDVTSSLHWSYDAVAGMEFFKNDEVVFDLDDIMGLSF.

Disordered regions lie at residues 67 to 114 and 252 to 288; these read GGEG…SVVV and GVGS…FGPD. The WRKY DNA-binding region spans 112–180; the sequence is VVVKNLDDGQ…YIGEHTCRDP (69 aa). A compositionally biased stretch (gly residues) spans 273-283; the sequence is RGGGGGGGVAG.

The protein belongs to the WRKY group III family. In terms of tissue distribution, expressed in aleurone cells.

It localises to the nucleus. Functionally, transcriptional activator involved in defense responses against pathogens. Acts as a positive regulator of defense responses against the rice blast fungus Magnaporthe oryzae. Acts through W-boxes, which are cis-elements that are enriched in the promoters of several defense-related genes. Plays an important role in the benzothiadiazole-induced disease resistance by mediating salicylic acid (SA) defense signaling pathway, independently of the disease resistance gene NPR1/NH1. Acts as a negative regulator of defense responses against the bacterial blight Xanthomonas oryzae pv oryzae (Xoo) and the bacterial streak Xanthomonas oryzae pv oryzicola (Xoc). Acts downstream of abscisic acid (ABA) signaling in response to the rice blast fungus. ABA is a negative regulator of defense responses that interacts antagonistically with salicylic acid (SA) signaling pathway. Acts as a negative regulator of ABA signaling that suppresses growth of seedlings. Does not seem to be involved in the regulation of salt stress response. Acts as a negative regulator of cold stress response. Acts as a negative regulator of drought stress response. The sequence is that of Transcription factor WRKY45-1 from Oryza sativa subsp. japonica (Rice).